The chain runs to 422 residues: Tyrosine--tRNA ligase (422 aa).

Position 35 (Tyr-35) interacts with L-tyrosine. A 'HIGH' region motif is present at residues 40–49 (PTAPSLHLGN). L-tyrosine is bound by residues Tyr-170 and Gln-174. Positions 231-235 (KFGKT) match the 'KMSKS' region motif. Lys-234 is a binding site for ATP. One can recognise an S4 RNA-binding domain in the interval 353-419 (APVVDLFAEV…GKKNLAAVEV (67 aa)).

It belongs to the class-I aminoacyl-tRNA synthetase family. TyrS type 1 subfamily. As to quaternary structure, homodimer.

It is found in the cytoplasm. It carries out the reaction tRNA(Tyr) + L-tyrosine + ATP = L-tyrosyl-tRNA(Tyr) + AMP + diphosphate + H(+). Its function is as follows. Catalyzes the attachment of tyrosine to tRNA(Tyr) in a two-step reaction: tyrosine is first activated by ATP to form Tyr-AMP and then transferred to the acceptor end of tRNA(Tyr). In Streptomyces avermitilis (strain ATCC 31267 / DSM 46492 / JCM 5070 / NBRC 14893 / NCIMB 12804 / NRRL 8165 / MA-4680), this protein is Tyrosine--tRNA ligase.